The primary structure comprises 162 residues: Allophycocyanin beta chain (162 aa).

The residue at position 72 (N72) is an N4-methylasparagine. C82 contributes to the (2R,3E)-phycocyanobilin binding site.

It belongs to the phycobiliprotein family. In terms of assembly, heterodimer of an alpha and a beta chain. Post-translationally, contains one covalently linked phycocyanobilin chromophore.

The protein resides in the cellular thylakoid membrane. Its function is as follows. Light-harvesting photosynthetic bile pigment-protein from the phycobiliprotein complex. Allophycocyanin has a maximum absorption at approximately 650 nanometers. This Microchaete diplosiphon (Fremyella diplosiphon) protein is Allophycocyanin beta chain.